Consider the following 553-residue polypeptide: Probable malate:quinone oxidoreductase (553 aa).

A disordered region spans residues proline 524 to leucine 553.

The protein belongs to the MQO family. FAD serves as cofactor.

It catalyses the reaction (S)-malate + a quinone = a quinol + oxaloacetate. The protein operates within carbohydrate metabolism; tricarboxylic acid cycle; oxaloacetate from (S)-malate (quinone route): step 1/1. This is Probable malate:quinone oxidoreductase from Burkholderia lata (strain ATCC 17760 / DSM 23089 / LMG 22485 / NCIMB 9086 / R18194 / 383).